A 111-amino-acid chain; its full sequence is Cytochrome b-c1 complex subunit 7 (111 aa).

Residue A2 is modified to N-acetylalanine. Residue K12 is modified to N6-acetyllysine; alternate. K12 is subject to N6-succinyllysine; alternate. K19 carries the N6-acetyllysine modification. K78 carries the post-translational modification N6-acetyllysine; alternate. K78 bears the N6-succinyllysine; alternate mark. An N6-acetyllysine mark is found at K83 and K96.

Belongs to the UQCRB/QCR7 family. In terms of assembly, component of the ubiquinol-cytochrome c oxidoreductase (cytochrome b-c1 complex, complex III, CIII), a multisubunit enzyme composed of 11 subunits. The complex is composed of 3 respiratory subunits cytochrome b, cytochrome c1 and Rieske protein UQCRFS1, 2 core protein subunits UQCRC1/QCR1 and UQCRC2/QCR2, and 6 low-molecular weight protein subunits UQCRH/QCR6, UQCRB/QCR7, UQCRQ/QCR8, UQCR10/QCR9, UQCR11/QCR10 and subunit 9, the cleavage product of Rieske protein UQCRFS1. The complex exists as an obligatory dimer and forms supercomplexes (SCs) in the inner mitochondrial membrane with NADH-ubiquinone oxidoreductase (complex I, CI) and cytochrome c oxidase (complex IV, CIV), resulting in different assemblies (supercomplex SCI(1)III(2)IV(1) and megacomplex MCI(2)III(2)IV(2)).

It localises to the mitochondrion inner membrane. Component of the ubiquinol-cytochrome c oxidoreductase, a multisubunit transmembrane complex that is part of the mitochondrial electron transport chain which drives oxidative phosphorylation. The respiratory chain contains 3 multisubunit complexes succinate dehydrogenase (complex II, CII), ubiquinol-cytochrome c oxidoreductase (cytochrome b-c1 complex, complex III, CIII) and cytochrome c oxidase (complex IV, CIV), that cooperate to transfer electrons derived from NADH and succinate to molecular oxygen, creating an electrochemical gradient over the inner membrane that drives transmembrane transport and the ATP synthase. The cytochrome b-c1 complex catalyzes electron transfer from ubiquinol to cytochrome c, linking this redox reaction to translocation of protons across the mitochondrial inner membrane, with protons being carried across the membrane as hydrogens on the quinol. In the process called Q cycle, 2 protons are consumed from the matrix, 4 protons are released into the intermembrane space and 2 electrons are passed to cytochrome c. The chain is Cytochrome b-c1 complex subunit 7 (UQCRB) from Homo sapiens (Human).